Here is a 1730-residue protein sequence, read N- to C-terminus: Myosin-7 (1730 aa).

In terms of domain architecture, Myosin N-terminal SH3-like spans 8–56 (TVGSHVWVEDPDDAWIDGEVEEVNSEEITVNCSGKTVVAKLNNVYPKDP). A Myosin motor domain is found at 61–731 (LGVDDMTKLA…QMAEMDAHRA (671 aa)). Residues 155-162 (GESGAGKT) and 208-216 (NNNSSRFGK) each bind ATP. Actin-binding regions lie at residues 494–528 (LIEK…YQTF), 530–553 (NHKR…AGDV), 588–612 (FPPL…KQQL), and 612–634 (LQSL…KPNN). IQ domains follow at residues 757–786 (LQAA…EAAS), 782–811 (REAA…SACS), 831–850 (RRAT…HQRY), and 853–882 (TKKA…AAKE). Positions 883 to 1224 (TGALQDAKTK…VSDMETAEQI (342 aa)) form a coiled coil. The region spanning 1327 to 1678 (DRIVPVFGSA…ISNLKLLLTN (352 aa)) is the Dilute domain. 2 disordered regions span residues 1367–1387 (QSST…FGRM) and 1456–1520 (DSSV…SSEE). Residues 1456-1465 (DSSVVNSPSK) are compositionally biased toward low complexity. A compositionally biased stretch (basic and acidic residues) spans 1475–1508 (SSEENSPKKSSEENSPKESSGDKSPQKLSDDNSP).

This sequence belongs to the TRAFAC class myosin-kinesin ATPase superfamily. Myosin family. Plant myosin class XI subfamily. Homodimer.

Functionally, myosin heavy chain that is required for the cell cycle-regulated transport of various organelles and proteins for their segregation. Functions by binding with its tail domain to receptor proteins on organelles and exerting force with its N-terminal motor domain against actin filaments, thereby transporting its cargo along polarized actin cables. The protein is Myosin-7 (XI-A) of Arabidopsis thaliana (Mouse-ear cress).